We begin with the raw amino-acid sequence, 196 residues long: Ribonuclease HII (196 aa).

The RNase H type-2 domain maps to 1 to 196 (MVTIGVDEAG…FAPVAQLQLL (196 aa)). Residues Asp7, Glu8, and Asp103 each coordinate a divalent metal cation.

The protein belongs to the RNase HII family. It depends on Mn(2+) as a cofactor. The cofactor is Mg(2+).

It is found in the cytoplasm. It carries out the reaction Endonucleolytic cleavage to 5'-phosphomonoester.. Endonuclease that specifically degrades the RNA of RNA-DNA hybrids. The chain is Ribonuclease HII from Novosphingobium aromaticivorans (strain ATCC 700278 / DSM 12444 / CCUG 56034 / CIP 105152 / NBRC 16084 / F199).